Reading from the N-terminus, the 1165-residue chain is DNA-directed RNA polymerase subunit beta (1165 aa).

The protein belongs to the RNA polymerase beta chain family. As to quaternary structure, the RNAP catalytic core consists of 2 alpha, 1 beta, 1 beta' and 1 omega subunit. When a sigma factor is associated with the core the holoenzyme is formed, which can initiate transcription.

It carries out the reaction RNA(n) + a ribonucleoside 5'-triphosphate = RNA(n+1) + diphosphate. Functionally, DNA-dependent RNA polymerase catalyzes the transcription of DNA into RNA using the four ribonucleoside triphosphates as substrates. The sequence is that of DNA-directed RNA polymerase subunit beta from Corynebacterium glutamicum (strain R).